The primary structure comprises 143 residues: Small ribosomal subunit protein bS6 (143 aa).

Residues 96–143 (VTEASPMAAAKEERRDDRREVKKDVAAAPVEAKEDSVEEKSEEAASEE) are disordered. Basic and acidic residues predominate over residues 105–143 (AKEERRDDRREVKKDVAAAPVEAKEDSVEEKSEEAASEE).

Belongs to the bacterial ribosomal protein bS6 family.

Functionally, binds together with bS18 to 16S ribosomal RNA. This Colwellia psychrerythraea (strain 34H / ATCC BAA-681) (Vibrio psychroerythus) protein is Small ribosomal subunit protein bS6.